The primary structure comprises 428 residues: ATP-dependent RNA helicase RhlB (428 aa).

The Q motif signature appears at 9–37 (QKFSDFALHPLVVEALENKGFQYCTPIQA). Positions 40–219 (LPLTLSGRDV…FEQMNNAEYV (180 aa)) constitute a Helicase ATP-binding domain. 53–60 (AQTGTGKT) provides a ligand contact to ATP. A DEAD box motif is present at residues 165–168 (DEAD). In terms of domain architecture, Helicase C-terminal spans 245-390 (RLLQTLIEEE…VSKYNSDALL (146 aa)). The interval 394-428 (PAPKRLARTRTGNGPRRNSAPRRSGAPRNNRKRPG) is disordered.

This sequence belongs to the DEAD box helicase family. RhlB subfamily. As to quaternary structure, component of the RNA degradosome, which is a multiprotein complex involved in RNA processing and mRNA degradation.

Its subcellular location is the cytoplasm. The enzyme catalyses ATP + H2O = ADP + phosphate + H(+). In terms of biological role, DEAD-box RNA helicase involved in RNA degradation. Has RNA-dependent ATPase activity and unwinds double-stranded RNA. The polypeptide is ATP-dependent RNA helicase RhlB (Yersinia pseudotuberculosis serotype O:1b (strain IP 31758)).